Consider the following 741-residue polypeptide: ABC transporter D family member 2 (741 aa).

The next 3 helical transmembrane spans lie at 39–59 (GSLG…FSLV), 119–139 (FLSL…SVSI), and 260–280 (VVVM…VSGF). The ABC transmembrane type-1 domain occupies 131-409 (ARTMLSVSIA…LMVALSQAIG (279 aa)). Positions 518-740 (IKFENVSIVS…DDDHLKKPLS (223 aa)) constitute an ABC transporter domain. 551 to 558 (GPNGSGKS) is an ATP binding site.

Belongs to the ABC transporter superfamily. ABCD family. Peroxisomal fatty acyl CoA transporter (TC 3.A.1.203) subfamily.

It is found in the membrane. This chain is ABC transporter D family member 2 (abcD2), found in Dictyostelium discoideum (Social amoeba).